The chain runs to 324 residues: Putative glycosyltransferase R655 (324 aa).

This sequence belongs to the glycosyltransferase 25 family.

This is Putative glycosyltransferase R655 from Acanthamoeba polyphaga (Amoeba).